A 183-amino-acid chain; its full sequence is Large ribosomal subunit protein uL6 (183 aa).

This sequence belongs to the universal ribosomal protein uL6 family. In terms of assembly, part of the 50S ribosomal subunit.

This protein binds to the 23S rRNA, and is important in its secondary structure. It is located near the subunit interface in the base of the L7/L12 stalk, and near the tRNA binding site of the peptidyltransferase center. The chain is Large ribosomal subunit protein uL6 from Parabacteroides distasonis (strain ATCC 8503 / DSM 20701 / CIP 104284 / JCM 5825 / NCTC 11152).